A 254-amino-acid polypeptide reads, in one-letter code: Glycerol operon regulatory protein (254 aa).

In terms of domain architecture, HTH iclR-type spans 5-67 (IQSLERAAAM…DASGRYQLGA (63 aa)). A DNA-binding region (H-T-H motif) is located at residues 27-46 (LSDIASSLGLAKGTAHGILR). Residues 82–251 (LRARALVWTD…ARAVSRDLGA (170 aa)) enclose the IclR-ED domain.

In terms of biological role, may be an activator protein for the gylABX operon. This is Glycerol operon regulatory protein (gylR) from Streptomyces coelicolor (strain ATCC BAA-471 / A3(2) / M145).